A 121-amino-acid polypeptide reads, in one-letter code: UPF0102 protein Hhal_2103 (121 aa).

Residues 1 to 20 (MMAPQTTRNDPRQRGQEAEE) form a disordered region. Positions 9 to 20 (NDPRQRGQEAEE) are enriched in basic and acidic residues.

It belongs to the UPF0102 family.

This is UPF0102 protein Hhal_2103 from Halorhodospira halophila (strain DSM 244 / SL1) (Ectothiorhodospira halophila (strain DSM 244 / SL1)).